The following is a 141-amino-acid chain: ATP synthase F(0) complex subunit C2, mitochondrial (141 aa).

Residues 1–66 (MYACSKFVST…RSFQTSAISR (66 aa)) constitute a mitochondrion transit peptide. A helical transmembrane segment spans residues 82–102 (VGVAGSGAGIGTVFGSLIIGY). N6,N6,N6-trimethyllysine is present on Lys109. A helical membrane pass occupies residues 117–137 (ILGFALSEAMGLFCLMVAFLI).

This sequence belongs to the ATPase C chain family. In terms of assembly, F-type ATPases have 2 components, CF(1) - the catalytic core - and CF(0) - the membrane proton channel. CF(1) has five subunits: alpha(3), beta(3), gamma(1), delta(1), epsilon(1). CF(0) has three main subunits: a, b and c. Interacts with DNAJC30; interaction is direct. Trimethylated by ATPSCKMT at Lys-109. Methylation is required for proper incorporation of the C subunit into the ATP synthase complex and mitochondrial respiration.

The protein localises to the mitochondrion membrane. Mitochondrial membrane ATP synthase (F(1)F(0) ATP synthase or Complex V) produces ATP from ADP in the presence of a proton gradient across the membrane which is generated by electron transport complexes of the respiratory chain. F-type ATPases consist of two structural domains, F(1) - containing the extramembraneous catalytic core and F(0) - containing the membrane proton channel, linked together by a central stalk and a peripheral stalk. During catalysis, ATP synthesis in the catalytic domain of F(1) is coupled via a rotary mechanism of the central stalk subunits to proton translocation. Part of the complex F(0) domain. A homomeric c-ring of probably 10 subunits is part of the complex rotary element. The protein is ATP synthase F(0) complex subunit C2, mitochondrial of Rattus norvegicus (Rat).